The sequence spans 220 residues: N-(5'-phosphoribosyl)anthranilate isomerase (220 aa).

This sequence belongs to the TrpF family.

It catalyses the reaction N-(5-phospho-beta-D-ribosyl)anthranilate = 1-(2-carboxyphenylamino)-1-deoxy-D-ribulose 5-phosphate. Its pathway is amino-acid biosynthesis; L-tryptophan biosynthesis; L-tryptophan from chorismate: step 3/5. The protein is N-(5'-phosphoribosyl)anthranilate isomerase of Xylella fastidiosa (strain M12).